The following is a 497-amino-acid chain: UPF0371 protein cu0538 (497 aa).

The protein belongs to the UPF0371 family.

This chain is UPF0371 protein cu0538, found in Corynebacterium urealyticum (strain ATCC 43042 / DSM 7109).